The primary structure comprises 392 residues: O-phospho-L-seryl-tRNA:Cys-tRNA synthase 1 (392 aa).

Pyridoxal 5'-phosphate-binding positions include 85–86 (AR), Asn190, and 213–215 (SGH). Lys216 is modified (N6-(pyridoxal phosphate)lysine).

It belongs to the SepCysS family. As to quaternary structure, homodimer. Interacts with SepRS. Pyridoxal 5'-phosphate serves as cofactor.

The catalysed reaction is O-phospho-L-seryl-tRNA(Cys) + hydrogen sulfide + H(+) = L-cysteinyl-tRNA(Cys) + phosphate. Functionally, converts O-phospho-L-seryl-tRNA(Cys) (Sep-tRNA(Cys)) to L-cysteinyl-tRNA(Cys) (Cys-tRNA(Cys)). This chain is O-phospho-L-seryl-tRNA:Cys-tRNA synthase 1, found in Methanocorpusculum labreanum (strain ATCC 43576 / DSM 4855 / Z).